A 480-amino-acid chain; its full sequence is Bifunctional pantoate ligase/cytidylate kinase (480 aa).

Residues 1 to 243 form a pantoate--beta-alanine ligase region; the sequence is MPTMGGLHQG…CGTTRLIDHV (243 aa). 4–11 is a binding site for ATP; the sequence is MGGLHQGH. Residue His11 is the Proton donor of the active site. Gln34 is a binding site for (R)-pantoate. Gln34 provides a ligand contact to beta-alanine. 123-126 contacts ATP; it reads GEKD. (R)-pantoate is bound at residue Gln129. Residues Val152 and 160-163 contribute to the ATP site; that span reads LSSR. The cytidylate kinase stretch occupies residues 244-480; that stretch reads FLMTRQPLVA…GEEAWPTPAG (237 aa).

It in the N-terminal section; belongs to the pantothenate synthetase family. In the C-terminal section; belongs to the cytidylate kinase family. Type 1 subfamily.

The protein localises to the cytoplasm. The enzyme catalyses (R)-pantoate + beta-alanine + ATP = (R)-pantothenate + AMP + diphosphate + H(+). It catalyses the reaction CMP + ATP = CDP + ADP. The catalysed reaction is dCMP + ATP = dCDP + ADP. It functions in the pathway cofactor biosynthesis; (R)-pantothenate biosynthesis; (R)-pantothenate from (R)-pantoate and beta-alanine: step 1/1. In terms of biological role, catalyzes the condensation of pantoate with beta-alanine in an ATP-dependent reaction via a pantoyl-adenylate intermediate. Functionally, catalyzes the transfer of a phosphate group from ATP to either CMP or dCMP to form CDP or dCDP and ADP, respectively. In Synechococcus sp. (strain CC9605), this protein is Bifunctional pantoate ligase/cytidylate kinase.